A 261-amino-acid polypeptide reads, in one-letter code: Acetoacetate decarboxylase 2 (261 aa).

The Schiff-base intermediate with acetoacetate role is filled by K116.

This sequence belongs to the ADC family.

It carries out the reaction acetoacetate + H(+) = acetone + CO2. Its function is as follows. Catalyzes the conversion of acetoacetate to acetone and carbon dioxide. This Mesorhizobium japonicum (strain LMG 29417 / CECT 9101 / MAFF 303099) (Mesorhizobium loti (strain MAFF 303099)) protein is Acetoacetate decarboxylase 2.